A 127-amino-acid chain; its full sequence is UPF0102 protein Reut_A3265 (127 aa).

The protein belongs to the UPF0102 family.

In Cupriavidus pinatubonensis (strain JMP 134 / LMG 1197) (Cupriavidus necator (strain JMP 134)), this protein is UPF0102 protein Reut_A3265.